Consider the following 895-residue polypeptide: ABC-transporter-regulating transcription factor (895 aa).

The segment at residues 69–96 is a DNA-binding region (zn(2)-C6 fungal-type); the sequence is CDMCRKKKIKCDGKMPKCSHCTNYKTDC. Residues 156–218 are disordered; it reads HASGSNTPHN…QKESETEVEG (63 aa). The span at 158–207 shows a compositional bias: polar residues; sequence SGSNTPHNPQKINIPSQSQIAMSQQNSSSHYSTPRLESQSSPRTAATSPE. A helical membrane pass occupies residues 648-668; it reads CVWLILYYPVSALVTLFANIL. The segment at 726–813 is disordered; that stretch reads ESYSKKKRKS…TGVSTNIPPN (88 aa). A compositionally biased stretch (low complexity) spans 755–765; it reads PSTTQPTQAPS.

As to quaternary structure, interacts with ncaA.

Its subcellular location is the nucleus. The protein localises to the membrane. Transcription factor that regulates expression of the genes related to ergosterol biosynthesis, including erg3B, erg24A, erg25A, as well as cyp51A that encodes a target protein of azoles. In coordination with ffmA and ncaA, is responsible for the expression of the ABC transporter abcC/cdr1B/abcG1 related to azole resistance. Directly binds both the cyp51A and abcC/cdr1B/abcG1 promoters at a conserved 34 bp region called the atrR response element (ATRE). AtrR also binds to the promoter regions of both the sterol response transcription factor srbA and atrR genes themselves, the latter suggesting the possibility that atrR is autoregulated. Also regulates iron uptake, most likely via cooperation with SrbA. AtrR is necessary for hypoxia adaptation and virulence. This is ABC-transporter-regulating transcription factor from Aspergillus fumigatus (strain ATCC MYA-4609 / CBS 101355 / FGSC A1100 / Af293) (Neosartorya fumigata).